We begin with the raw amino-acid sequence, 248 residues long: 4-hydroxy-tetrahydrodipicolinate reductase (248 aa).

NAD(+)-binding positions include 9-14, 77-79, and 104-107; these read GAQGRV, GTT, and APNF. Histidine 134 acts as the Proton donor/acceptor in catalysis. Histidine 135 is a binding site for (S)-2,3,4,5-tetrahydrodipicolinate. Lysine 138 functions as the Proton donor in the catalytic mechanism. Residue 144 to 145 coordinates (S)-2,3,4,5-tetrahydrodipicolinate; sequence GT. The interval 157-176 is disordered; that stretch reads RREAGMPTQPDATEQSLDGA.

The protein belongs to the DapB family.

It is found in the cytoplasm. The enzyme catalyses (S)-2,3,4,5-tetrahydrodipicolinate + NAD(+) + H2O = (2S,4S)-4-hydroxy-2,3,4,5-tetrahydrodipicolinate + NADH + H(+). The catalysed reaction is (S)-2,3,4,5-tetrahydrodipicolinate + NADP(+) + H2O = (2S,4S)-4-hydroxy-2,3,4,5-tetrahydrodipicolinate + NADPH + H(+). Its pathway is amino-acid biosynthesis; L-lysine biosynthesis via DAP pathway; (S)-tetrahydrodipicolinate from L-aspartate: step 4/4. In terms of biological role, catalyzes the conversion of 4-hydroxy-tetrahydrodipicolinate (HTPA) to tetrahydrodipicolinate. The polypeptide is 4-hydroxy-tetrahydrodipicolinate reductase (Corynebacterium diphtheriae (strain ATCC 700971 / NCTC 13129 / Biotype gravis)).